The chain runs to 365 residues: Homeobox protein knotted-1-like 7 (365 aa).

A compositionally biased stretch (basic and acidic residues) spans 1–11 (MEELEGHRGEG). A disordered region spans residues 1 to 20 (MEELEGHRGEGRLPPPPPLL). The 21-residue stretch at 227–247 (ALKRHLLRKYSGYLGGLRKEL) folds into the ELK domain. Positions 248-311 (SKKRKKGKLP…NQRKRHWKPT (64 aa)) form a DNA-binding region, homeobox; TALE-type.

The protein belongs to the TALE/KNOX homeobox family.

It localises to the nucleus. Functionally, probable transcription factor that may be involved in shoot formation during embryogenesis. In Oryza sativa subsp. japonica (Rice), this protein is Homeobox protein knotted-1-like 7 (OSH3).